The chain runs to 224 residues: Leucyl/phenylalanyl-tRNA--protein transferase (224 aa).

It belongs to the L/F-transferase family.

The protein localises to the cytoplasm. It catalyses the reaction N-terminal L-lysyl-[protein] + L-leucyl-tRNA(Leu) = N-terminal L-leucyl-L-lysyl-[protein] + tRNA(Leu) + H(+). The enzyme catalyses N-terminal L-arginyl-[protein] + L-leucyl-tRNA(Leu) = N-terminal L-leucyl-L-arginyl-[protein] + tRNA(Leu) + H(+). It carries out the reaction L-phenylalanyl-tRNA(Phe) + an N-terminal L-alpha-aminoacyl-[protein] = an N-terminal L-phenylalanyl-L-alpha-aminoacyl-[protein] + tRNA(Phe). In terms of biological role, functions in the N-end rule pathway of protein degradation where it conjugates Leu, Phe and, less efficiently, Met from aminoacyl-tRNAs to the N-termini of proteins containing an N-terminal arginine or lysine. The chain is Leucyl/phenylalanyl-tRNA--protein transferase from Rhodopseudomonas palustris (strain HaA2).